We begin with the raw amino-acid sequence, 398 residues long: Serine/threonine-protein phosphatase 2A activator (398 aa).

ATP-binding residues include Arg-137, Thr-142, and Gly-143. Gly-197 and Asp-203 together coordinate Mg(2+). The ATP site is built by Pro-293, Gln-296, and His-297. The segment covering 343 to 352 (PVATAPPPPA) has biased composition (pro residues). Residues 343–398 (PVATAPPPPAESLSIEQNVGDSSSESSDNSVVLRPSTSSSSLVAAAEGSGDKPSKE) are disordered. Residues 363-388 (DSSSESSDNSVVLRPSTSSSSLVAAA) are compositionally biased toward low complexity.

Belongs to the PTPA-type PPIase family. As to quaternary structure, associates with PP2A heterodimeric core enzyme PP2A(D), composed of a catalytic subunit (subunit C) and a constant regulatory subunit (PR65 or subunit A). Interacts with the catalytic subunit Pp4-19C of the serine/threonine-protein phosphatase 4 (PP4) complex; thereby mediating basal localization of the Miranda (Mira) complex; probably by facilitating the dephosphorylation of Mira.

It localises to the cytoplasm. The protein localises to the nucleus. The enzyme catalyses [protein]-peptidylproline (omega=180) = [protein]-peptidylproline (omega=0). PPIases accelerate the folding of proteins. It catalyzes the cis-trans isomerization of proline imidic peptide bonds in oligopeptides. Acts as a regulatory subunit for serine/threonine-protein phosphatase 2A (PP2A). Modulates PP2A activity or substrate specificity, probably by inducing a conformational change in the catalytic subunit, a proposed direct target of the PPIase. Acts as mediator for the basal localization of the Miranda (Mira) complex during mitosis of larval neuroblast asymmetric division. Associates with the phosphatase 4 (PP4) complex to mediate basal localization of Mira; probably by facilitating the dephosphorylation of Mira. Cortical association of Mira mediated by the PTPA-PP4 complex seems to be independent of aPKC activity. This chain is Serine/threonine-protein phosphatase 2A activator, found in Drosophila melanogaster (Fruit fly).